Reading from the N-terminus, the 586-residue chain is Major facilitator superfamily domain-containing protein 6-like (586 aa).

The next 2 membrane-spanning stretches (helical) occupy residues 50–70 and 78–98; these read ILMG…AFLA and MFLT…VLVP. The interval 218-237 is disordered; it reads GPVNLSKPQGDTQTPDHSSK. A compositionally biased stretch (polar residues) spans 223–237; the sequence is SKPQGDTQTPDHSSK. Helical transmembrane passes span 240–260, 284–304, 318–338, 365–385, 397–417, 428–448, 454–474, 494–514, and 519–538; these read PWTF…AAPL, LWVW…ALVG, VIYF…STAF, LILL…VQDF, ELVM…FHPF, VGVL…YAFI, VLPV…AVGA, GHFY…VVLH, and VLYE…FLSI.

It belongs to the major facilitator superfamily. MFSD6 family.

It is found in the membrane. In Mus musculus (Mouse), this protein is Major facilitator superfamily domain-containing protein 6-like (Mfsd6l).